The following is a 247-amino-acid chain: UPF0280 protein MmarC6_1437 (247 aa).

The protein belongs to the UPF0280 family.

The sequence is that of UPF0280 protein MmarC6_1437 from Methanococcus maripaludis (strain C6 / ATCC BAA-1332).